We begin with the raw amino-acid sequence, 133 residues long: Vascular endothelial growth factor homolog (133 aa).

Positions Met-1–Ala-20 are cleaved as a signal peptide. 3 cysteine pairs are disulfide-bonded: Cys-36/Cys-78, Cys-67/Cys-112, and Cys-71/Cys-114. A glycan (N-linked (GlcNAc...) asparagine; by host) is linked at Asn-85.

The protein belongs to the PDGF/VEGF growth factor family. Homodimer; disulfide-linked.

It localises to the secreted. In terms of biological role, induces endothelial proliferation. The protein is Vascular endothelial growth factor homolog of Orf virus (strain NZ2) (OV NZ-2).